We begin with the raw amino-acid sequence, 462 residues long: TNF receptor-associated factor family protein DDB_G0267754 (462 aa).

The RING-type; degenerate zinc finger occupies 24–62 (CCVCECLLIEALQCRNGHVACKNCFIKIVKSKKECMTCR). Positions 104 to 127 (KNGNGNEGSSANEIEQPQQPQQQQ) are disordered. TRAF-type zinc fingers lie at residues 150 to 217 (SHLK…SHTE) and 214 to 273 (SHTE…NQLA). The MATH domain maps to 326-449 (MFRGKWVISN…NDTLTINFSI (124 aa)).

This sequence belongs to the TNF receptor-associated factor family. A subfamily.

It localises to the cytoplasm. Functionally, probable adapter protein and signal transducer that links members of the tumor necrosis factor receptor family to different signaling pathways by association with the receptor cytoplasmic domain and kinases. The chain is TNF receptor-associated factor family protein DDB_G0267754 from Dictyostelium discoideum (Social amoeba).